The chain runs to 332 residues: Ornithine carbamoyltransferase 1, catabolic (332 aa).

Carbamoyl phosphate-binding positions include 56–59 (STRT), Gln83, Arg107, and 134–137 (HPTQ). L-ornithine contacts are provided by residues Asn167, Asp231, and 235–236 (SM). Carbamoyl phosphate-binding positions include 273-274 (CL) and Arg318.

This sequence belongs to the aspartate/ornithine carbamoyltransferase superfamily. OTCase family.

It is found in the cytoplasm. The catalysed reaction is carbamoyl phosphate + L-ornithine = L-citrulline + phosphate + H(+). It functions in the pathway amino-acid degradation; L-arginine degradation via ADI pathway; carbamoyl phosphate from L-arginine: step 2/2. Its function is as follows. Reversibly catalyzes the transfer of the carbamoyl group from carbamoyl phosphate (CP) to the N(epsilon) atom of ornithine (ORN) to produce L-citrulline. This Streptococcus agalactiae serotype III (strain NEM316) protein is Ornithine carbamoyltransferase 1, catabolic (arcB1).